A 967-amino-acid polypeptide reads, in one-letter code: A disintegrin and metalloproteinase with thrombospondin motifs 1 (967 aa).

2 disordered regions span residues 1-27 (MQRA…APGS) and 192-250 (GDVG…SIRK). The first 49 residues, 1–49 (MQRAVPEGFGRRKLGSDMGNAERAPGSRSFGPVPTLLLLAAALLAVSDA), serve as a signal peptide directing secretion. Positions 50-252 (LGRPSEEDEE…TGTGSIRKKR (203 aa)) are excised as a propeptide. The Cysteine switch signature appears at 196-203 (GTCGVVDD). Cysteine 198 contributes to the Zn(2+) binding site. Positions 203–212 (DEPRPTGKAE) are enriched in basic and acidic residues. A compositionally biased stretch (acidic residues) spans 213 to 226 (TEDEDEGTEGEDEG). The region spanning 258–467 (RYVETMLVAD…GHGECLMDKP (210 aa)) is the Peptidase M12B domain. The Ca(2+) site is built by glutamate 261, aspartate 344, and aspartate 351. 4 disulfide bridges follow: cysteine 333/cysteine 385, cysteine 362/cysteine 367, cysteine 379/cysteine 462, and cysteine 417/cysteine 446. Histidine 401 contacts Zn(2+). The active site involves glutamate 402. Residues histidine 405 and histidine 411 each contribute to the Zn(2+) site. Ca(2+) is bound by residues cysteine 462 and aspartate 465. The Disintegrin domain maps to 476-559 (DLPGTSYDAN…DRKHFDTPFH (84 aa)). 4 disulfides stabilise this stretch: cysteine 488–cysteine 511, cysteine 499–cysteine 521, cysteine 506–cysteine 540, and cysteine 534–cysteine 545. The N-linked (GlcNAc...) asparagine glycan is linked to asparagine 547. The 56-residue stretch at 559 to 614 (HGSWGMWGPWGDCSRTCGGGVQYTMRECDNPVPKNGGKYCEGKRVRYRSCNLEDCP) folds into the TSP type-1 1 domain. 3 cysteine pairs are disulfide-bonded: cysteine 571–cysteine 608, cysteine 575–cysteine 613, and cysteine 586–cysteine 598. Asparagine 720 and asparagine 764 each carry an N-linked (GlcNAc...) asparagine glycan. The interval 725 to 849 (KKISGSVTSA…YFVKKKKESF (125 aa)) is spacer. 2 TSP type-1 domains span residues 854 to 905 (TFSA…RPCA) and 908 to 967 (PCPQ…AECS).

Zn(2+) serves as cofactor. In terms of processing, the precursor is cleaved by a furin endopeptidase. Glycosylated. Can be O-fucosylated by POFUT2 on a serine or a threonine residue found within the consensus sequence C1-X(2)-(S/T)-C2-G of the TSP type-1 repeat domains where C1 and C2 are the first and second cysteine residue of the repeat, respectively. Fucosylated repeats can then be further glycosylated by the addition of a beta-1,3-glucose residue by the glucosyltransferase, B3GALTL. Fucosylation mediates the efficient secretion of ADAMTS family members. Can also be C-glycosylated with one or two mannose molecules on tryptophan residues within the consensus sequence W-X-X-W of the TPRs, and N-glycosylated. These other glycosylations can also facilitate secretion.

Its subcellular location is the secreted. The protein resides in the extracellular space. It localises to the extracellular matrix. In terms of biological role, metalloprotease which cleaves aggrecan, a cartilage proteoglycan, at the '1938-Glu-|-Leu-1939' site (within the chondroitin sulfate attachment domain), and may be involved in its turnover. Also cleaves COMP. Has angiogenic inhibitor activity. May play a critical role in follicular rupture. This is A disintegrin and metalloproteinase with thrombospondin motifs 1 (ADAMTS1) from Homo sapiens (Human).